We begin with the raw amino-acid sequence, 277 residues long: Reaction center protein L chain (277 aa).

The next 3 membrane-spanning stretches (helical) occupy residues 30–52, 84–106, and 113–135; these read FYVG…LIAW, GGIW…LREV, and GIGF…LVVI. The (7R,8Z)-bacteriochlorophyll b site is built by His-154 and His-174. Residues 173–195 form a helical membrane-spanning segment; sequence AHMIAITFFFTTCLALALHGGLV. His-191 provides a ligand contact to Fe cation. Phe-217 contacts a ubiquinone. Fe cation is bound at residue His-231. Residues 233–255 traverse the membrane as a helical segment; sequence LGLFLALSAVFFSAVCMIISGPV.

Belongs to the reaction center PufL/M/PsbA/D family. Reaction center is composed of four bacteriochlorophylls, two bacteriopheophytins, two ubiquinones, one iron, and three highly hydrophobic polypeptide chains (designated L, M, and H).

The protein localises to the cellular chromatophore membrane. The reaction center is a membrane-bound complex that mediates the initial photochemical event in the electron transfer process of photosynthesis. In Rhodopseudomonas palustris (strain ATCC BAA-98 / CGA009), this protein is Reaction center protein L chain (pufL).